Reading from the N-terminus, the 422-residue chain is Gamma-glutamyl phosphate reductase (422 aa).

It belongs to the gamma-glutamyl phosphate reductase family.

It is found in the cytoplasm. The enzyme catalyses L-glutamate 5-semialdehyde + phosphate + NADP(+) = L-glutamyl 5-phosphate + NADPH + H(+). It functions in the pathway amino-acid biosynthesis; L-proline biosynthesis; L-glutamate 5-semialdehyde from L-glutamate: step 2/2. Catalyzes the NADPH-dependent reduction of L-glutamate 5-phosphate into L-glutamate 5-semialdehyde and phosphate. The product spontaneously undergoes cyclization to form 1-pyrroline-5-carboxylate. This Chloroflexus aurantiacus (strain ATCC 29366 / DSM 635 / J-10-fl) protein is Gamma-glutamyl phosphate reductase.